We begin with the raw amino-acid sequence, 228 residues long: MHTKWKTWAHVTKLDPDKHLTEDEIAEIATSGTDALILSGTLNITKDNMSQLRDQVKEYGLPLVVEPAGPESVIFHGIDLLYVASVMNTSDARWIVGKHRDWAMNPDIVWEKVIPEAYIVLNPNSAVGRVTGADCGISAEEVAAYASIADHYFKFPIVYIEYSGMYGNPDIVKRAGEAIDHAVLYYGGGIDSAEKAAEMAKYADTIVVGNAVYEKGVKTLLETVQAVQ.

Lysine 13 is a binding site for sn-glycerol 1-phosphate. Mg(2+) is bound by residues aspartate 15 and threonine 41. Residues 159-164 (YIEYSG), glycine 189, and 209-210 (GN) each bind sn-glycerol 1-phosphate.

This sequence belongs to the GGGP/HepGP synthase family. Group I subfamily. Requires Mg(2+) as cofactor.

Its subcellular location is the cytoplasm. The catalysed reaction is sn-glycerol 1-phosphate + (2E,6E,10E)-geranylgeranyl diphosphate = sn-3-O-(geranylgeranyl)glycerol 1-phosphate + diphosphate. Its pathway is membrane lipid metabolism; glycerophospholipid metabolism. Prenyltransferase that catalyzes the transfer of the geranylgeranyl moiety of geranylgeranyl diphosphate (GGPP) to the C3 hydroxyl of sn-glycerol-1-phosphate (G1P). This reaction is the first ether-bond-formation step in the biosynthesis of archaeal membrane lipids. The sequence is that of Geranylgeranylglyceryl phosphate synthase from Methanospirillum hungatei JF-1 (strain ATCC 27890 / DSM 864 / NBRC 100397 / JF-1).